The following is a 228-amino-acid chain: Phosphoribosylformylglycinamidine synthase subunit PurQ (228 aa).

Positions 2 to 228 (TVVVVQFGGS…DGKGILQAFG (227 aa)) constitute a Glutamine amidotransferase type-1 domain. Cysteine 88 (nucleophile) is an active-site residue. Active-site residues include histidine 205 and glutamate 207.

As to quaternary structure, part of the FGAM synthase complex composed of 1 PurL, 1 PurQ and 2 PurS subunits.

It localises to the cytoplasm. The enzyme catalyses N(2)-formyl-N(1)-(5-phospho-beta-D-ribosyl)glycinamide + L-glutamine + ATP + H2O = 2-formamido-N(1)-(5-O-phospho-beta-D-ribosyl)acetamidine + L-glutamate + ADP + phosphate + H(+). It carries out the reaction L-glutamine + H2O = L-glutamate + NH4(+). Its pathway is purine metabolism; IMP biosynthesis via de novo pathway; 5-amino-1-(5-phospho-D-ribosyl)imidazole from N(2)-formyl-N(1)-(5-phospho-D-ribosyl)glycinamide: step 1/2. Its function is as follows. Part of the phosphoribosylformylglycinamidine synthase complex involved in the purines biosynthetic pathway. Catalyzes the ATP-dependent conversion of formylglycinamide ribonucleotide (FGAR) and glutamine to yield formylglycinamidine ribonucleotide (FGAM) and glutamate. The FGAM synthase complex is composed of three subunits. PurQ produces an ammonia molecule by converting glutamine to glutamate. PurL transfers the ammonia molecule to FGAR to form FGAM in an ATP-dependent manner. PurS interacts with PurQ and PurL and is thought to assist in the transfer of the ammonia molecule from PurQ to PurL. This chain is Phosphoribosylformylglycinamidine synthase subunit PurQ, found in Haloquadratum walsbyi (strain DSM 16790 / HBSQ001).